The chain runs to 102 residues: Class I hydrophobin 1 (102 aa).

The first 18 residues, 1–18 (MSLFKILVAAATVATALA), serve as a signal peptide directing secretion. Disulfide bonds link cysteine 37/cysteine 84, cysteine 45/cysteine 78, cysteine 46/cysteine 63, and cysteine 85/cysteine 97.

It belongs to the fungal hydrophobin family.

The protein resides in the secreted. The protein localises to the cell wall. Functionally, aerial growth, conidiation, and dispersal of filamentous fungi in the environment rely upon a capability of their secreting small amphipathic proteins called hydrophobins (HPBs) with low sequence identity. Class I can self-assemble into an outermost layer of rodlet bundles on aerial cell surfaces, conferring cellular hydrophobicity that supports fungal growth, development and dispersal; whereas Class II form highly ordered films at water-air interfaces through intermolecular interactions but contribute nothing to the rodlet structure. Hyd1 is essential for stress tolerance, conidial hydrophobicity, adhesion to insect cuticle, and insect infectivity/pathogenicity. Plays a neglectable role in hyphal growth and asexual development. In Metarhizium robertsii (strain ARSEF 23 / ATCC MYA-3075) (Metarhizium anisopliae (strain ARSEF 23)), this protein is Class I hydrophobin 1.